A 120-amino-acid chain; its full sequence is Protein crumbs homolog 3 (120 aa).

Positions 1–26 (MANPGLGLLLALGLPFLLARWGRAWG) are cleaved as a signal peptide. Topologically, residues 27–59 (QIQTTSANENSTVLPSSTSSSSDGNLRPEAITA) are extracellular. Asn-36 is a glycosylation site (N-linked (GlcNAc...) asparagine). The chain crosses the membrane as a helical span at residues 60–80 (IIVVFSLLAALLLAVGLALLV). The Cytoplasmic segment spans residues 81–120 (RKLREKRQTEGTYRPSSEEQVGARVPPTPNLKLPPEERLI). The interval 84–120 (REKRQTEGTYRPSSEEQVGARVPPTPNLKLPPEERLI) is interaction with EPB41L5. The interval 87 to 120 (RQTEGTYRPSSEEQVGARVPPTPNLKLPPEERLI) is disordered. Positions 90–99 (EGTYRPSSEE) are enriched in polar residues. The PDZ-binding signature appears at 117-120 (ERLI).

As to quaternary structure, component of a complex composed of CRB3, PALS1 and PATJ. Interacts (via C-terminus) with PALS1 (via PDZ domain). Interacts with PARD6A. Interacts (via intracellular domain) with EPB41L5. Interacts with WDR83. In terms of tissue distribution, preferentially expressed in epithelial tissues. Expressed at high levels in lung, kidney, and colon. Expressed at high levels in retina, colon and mammary glands. Moderately expressed in liver, spleen, pancreas and prostate. Moderately to weakly expressed in the placenta. Weakly expressed in skeletal muscle and small intestine.

It is found in the apical cell membrane. Its subcellular location is the cell junction. The protein resides in the tight junction. Its function is as follows. Involved in the establishment of cell polarity in mammalian epithelial cells. Regulates the morphogenesis of tight junctions. Involved in promoting phosphorylation and cytoplasmic retention of transcriptional coactivators YAP1 and WWTR1/TAZ which leads to suppression of TGFB1-dependent transcription of target genes such as CCN2/CTGF, SERPINE1/PAI1, SNAI1/SNAIL1 and SMAD7. The sequence is that of Protein crumbs homolog 3 from Homo sapiens (Human).